Here is a 190-residue protein sequence, read N- to C-terminus: Dual-action ribosomal maturation protein DarP (190 aa).

Residues 1-31 (MIHADHDDNLPDDEEGLPLPPSKSQRKRDMH) are disordered.

It belongs to the DarP family.

It is found in the cytoplasm. Its function is as follows. Member of a network of 50S ribosomal subunit biogenesis factors which assembles along the 30S-50S interface, preventing incorrect 23S rRNA structures from forming. Promotes peptidyl transferase center (PTC) maturation. The polypeptide is Dual-action ribosomal maturation protein DarP (Aromatoleum aromaticum (strain DSM 19018 / LMG 30748 / EbN1) (Azoarcus sp. (strain EbN1))).